We begin with the raw amino-acid sequence, 151 residues long: Internal scaffolding protein VP3 (151 aa).

A disordered region spans residues 120–151; the sequence is VETPQQAPQSTTNQTTTKPAPASGEPTPVPTP. Polar residues predominate over residues 122–137; sequence TPQQAPQSTTNQTTTK.

This sequence belongs to the microvidae B protein family.

Its subcellular location is the host cytoplasm. In terms of biological role, participates in the assembly of the viral procapsid in the cytoplasm. Internal scaffolding protein VP3 is released from the procapsid upon genome packaging, possibly through affinity displacement by the protein VP8, or by proteolysis. This is Internal scaffolding protein VP3 from Bdellovibrio bacteriovorus (Bacteriophage phiMH2K).